A 310-amino-acid chain; its full sequence is Transcription factor MYB53 (310 aa).

2 consecutive HTH myb-type domains span residues Glu-9–Leu-61 and Arg-62–Leu-116. DNA-binding regions (H-T-H motif) lie at residues Trp-37 to Leu-61 and Trp-89 to Leu-112.

In terms of assembly, interacts with FBX5. As to expression, highly expressed in roots and at lower levels in leaves, stems and flowers.

Its subcellular location is the nucleus. Its function is as follows. Probable transcription factor. The protein is Transcription factor MYB53 of Arabidopsis thaliana (Mouse-ear cress).